A 257-amino-acid chain; its full sequence is Probable enoyl-CoA hydratase echA17 (257 aa).

Belongs to the enoyl-CoA hydratase/isomerase family.

It catalyses the reaction a (3S)-3-hydroxyacyl-CoA = a (2E)-enoyl-CoA + H2O. The enzyme catalyses a 4-saturated-(3S)-3-hydroxyacyl-CoA = a (3E)-enoyl-CoA + H2O. Its function is as follows. Could possibly oxidize fatty acids using specific components. The polypeptide is Probable enoyl-CoA hydratase echA17 (echA17) (Mycobacterium avium (strain 104)).